The sequence spans 302 residues: uncharacterized protein (302 aa).

Disordered regions lie at residues 1–167 (MPCR…QSSE) and 180–199 (PSLC…QRAS). Residues 39-54 (EESHAPSRDPRDHQGS) show a composition bias toward basic and acidic residues. Composition is skewed to polar residues over residues 123-133 (LSTSSCASVSR) and 183-197 (CPSQ…SPQR).

This is an uncharacterized protein from Homo sapiens (Human).